The chain runs to 283 residues: Diaminopimelate epimerase (283 aa).

Substrate is bound by residues Asn-14, Gln-47, and Asn-67. The active-site Proton donor is the Cys-76. Substrate-binding positions include 77–78, Asn-164, Asn-197, and 215–216; these read GN and ER. Cys-224 acts as the Proton acceptor in catalysis. A substrate-binding site is contributed by 225–226; sequence GT.

This sequence belongs to the diaminopimelate epimerase family. As to quaternary structure, homodimer.

The protein localises to the cytoplasm. The enzyme catalyses (2S,6S)-2,6-diaminopimelate = meso-2,6-diaminopimelate. Its pathway is amino-acid biosynthesis; L-lysine biosynthesis via DAP pathway; DL-2,6-diaminopimelate from LL-2,6-diaminopimelate: step 1/1. Functionally, catalyzes the stereoinversion of LL-2,6-diaminopimelate (L,L-DAP) to meso-diaminopimelate (meso-DAP), a precursor of L-lysine and an essential component of the bacterial peptidoglycan. The chain is Diaminopimelate epimerase from Neisseria meningitidis serogroup A / serotype 4A (strain DSM 15465 / Z2491).